Consider the following 207-residue polypeptide: Dephospho-CoA kinase (207 aa).

The 199-residue stretch at 5–203 (AVGLTGGVAC…ARYRALASVF (199 aa)) folds into the DPCK domain. 13-18 (ACGKSL) serves as a coordination point for ATP.

It belongs to the CoaE family.

The protein resides in the cytoplasm. It catalyses the reaction 3'-dephospho-CoA + ATP = ADP + CoA + H(+). The protein operates within cofactor biosynthesis; coenzyme A biosynthesis; CoA from (R)-pantothenate: step 5/5. Its function is as follows. Catalyzes the phosphorylation of the 3'-hydroxyl group of dephosphocoenzyme A to form coenzyme A. The sequence is that of Dephospho-CoA kinase from Xylella fastidiosa (strain Temecula1 / ATCC 700964).